A 218-amino-acid chain; its full sequence is Ependymin (218 aa).

The N-terminal stretch at 1–20 (MHTVKLLCVVFSCLCAVAWG) is a signal peptide. 2 N-linked (GlcNAc...) asparagine glycosylation sites follow: Asn-74 and Asn-97.

It belongs to the ependymin family. As to quaternary structure, forms disulfide-linked dimers. Post-translationally, binds calcium through the terminal sialic acids.

It is found in the secreted. In terms of biological role, may play a role in neural plasticity. May be involved during axon regeneration. The sequence is that of Ependymin (epd) from Devario aequipinnatus (Giant danio).